Consider the following 417-residue polypeptide: Serine hydroxymethyltransferase 4 (417 aa).

(6S)-5,6,7,8-tetrahydrofolate contacts are provided by residues L121 and 125–127 (GHL). Position 230 is an N6-(pyridoxal phosphate)lysine (K230). (6S)-5,6,7,8-tetrahydrofolate is bound at residue 355 to 357 (SPF).

This sequence belongs to the SHMT family. In terms of assembly, homodimer. Pyridoxal 5'-phosphate serves as cofactor.

Its subcellular location is the cytoplasm. It carries out the reaction (6R)-5,10-methylene-5,6,7,8-tetrahydrofolate + glycine + H2O = (6S)-5,6,7,8-tetrahydrofolate + L-serine. Its pathway is one-carbon metabolism; tetrahydrofolate interconversion. The protein operates within amino-acid biosynthesis; glycine biosynthesis; glycine from L-serine: step 1/1. Functionally, catalyzes the reversible interconversion of serine and glycine with tetrahydrofolate (THF) serving as the one-carbon carrier. This reaction serves as the major source of one-carbon groups required for the biosynthesis of purines, thymidylate, methionine, and other important biomolecules. Also exhibits THF-independent aldolase activity toward beta-hydroxyamino acids, producing glycine and aldehydes, via a retro-aldol mechanism. The sequence is that of Serine hydroxymethyltransferase 4 from Colwellia psychrerythraea (strain 34H / ATCC BAA-681) (Vibrio psychroerythus).